Here is a 910-residue protein sequence, read N- to C-terminus: Protein translocase subunit SecA (910 aa).

Residues Gln-86, 104–108 (GEGKT), and Asp-499 each bind ATP. The Zn(2+) site is built by Cys-894, Cys-896, Cys-905, and His-906.

This sequence belongs to the SecA family. In terms of assembly, monomer and homodimer. Part of the essential Sec protein translocation apparatus which comprises SecA, SecYEG and auxiliary proteins SecDF-YajC and YidC. The cofactor is Zn(2+).

It localises to the cell inner membrane. The protein localises to the cytoplasm. The catalysed reaction is ATP + H2O + cellular proteinSide 1 = ADP + phosphate + cellular proteinSide 2.. Part of the Sec protein translocase complex. Interacts with the SecYEG preprotein conducting channel. Has a central role in coupling the hydrolysis of ATP to the transfer of proteins into and across the cell membrane, serving both as a receptor for the preprotein-SecB complex and as an ATP-driven molecular motor driving the stepwise translocation of polypeptide chains across the membrane. The protein is Protein translocase subunit SecA of Rickettsia bellii (strain OSU 85-389).